The sequence spans 206 residues: Holliday junction branch migration complex subunit RuvA (206 aa).

The tract at residues 1-64 (MIGRLTGNLV…ETSQQLFGFI (64 aa)) is domain I. A domain II region spans residues 65 to 142 (DQQDREFFRM…SWQVTPSVDA (78 aa)). The tract at residues 143–154 (TGSLVALDSAAP) is flexible linker. The tract at residues 155–206 (SQNAIVAEAESALVALGYKPVEASKAVARVTSDEITRSEDLIRLALRNMIPA) is domain III.

This sequence belongs to the RuvA family. In terms of assembly, homotetramer. Forms an RuvA(8)-RuvB(12)-Holliday junction (HJ) complex. HJ DNA is sandwiched between 2 RuvA tetramers; dsDNA enters through RuvA and exits via RuvB. An RuvB hexamer assembles on each DNA strand where it exits the tetramer. Each RuvB hexamer is contacted by two RuvA subunits (via domain III) on 2 adjacent RuvB subunits; this complex drives branch migration. In the full resolvosome a probable DNA-RuvA(4)-RuvB(12)-RuvC(2) complex forms which resolves the HJ.

It localises to the cytoplasm. In terms of biological role, the RuvA-RuvB-RuvC complex processes Holliday junction (HJ) DNA during genetic recombination and DNA repair, while the RuvA-RuvB complex plays an important role in the rescue of blocked DNA replication forks via replication fork reversal (RFR). RuvA specifically binds to HJ cruciform DNA, conferring on it an open structure. The RuvB hexamer acts as an ATP-dependent pump, pulling dsDNA into and through the RuvAB complex. HJ branch migration allows RuvC to scan DNA until it finds its consensus sequence, where it cleaves and resolves the cruciform DNA. The sequence is that of Holliday junction branch migration complex subunit RuvA from Teredinibacter turnerae (strain ATCC 39867 / T7901).